The sequence spans 362 residues: Type-2 angiotensin II receptor (362 aa).

Residues 1–44 (MKANFSLATISKNITSSLHVGFVNISSNESTFNCSHKPSDKHLD) lie on the Extracellular side of the membrane. N-linked (GlcNAc...) asparagine glycosylation is found at asparagine 4, asparagine 13, asparagine 24, asparagine 28, and asparagine 33. Cystine bridges form between cysteine 34-cysteine 289 and cysteine 116-cysteine 194. Residues 45 to 69 (AIPVLYYIIFGVGFLVNTIVVTLFC) traverse the membrane as a helical segment. Topologically, residues 70-79 (CQKGPKKVSS) are cytoplasmic. Residues 80–103 (IYIFNLAVADLLLLATLPLWATYY) traverse the membrane as a helical segment. The angiotensin II site is built by tyrosine 102 and tyrosine 103. At 104-113 (SHRYDWIFGP) the chain is on the extracellular side. Residues 114–139 (VMCKVFGSFLTLNMFASIFFITCMSV) traverse the membrane as a helical segment. The Cytoplasmic segment spans residues 140–158 (DRYQSVIYPFLSQRRNPWQ). A helical membrane pass occupies residues 159–180 (ASYIVPLVWCMACLSSLPTFYF). The angiotensin II site is built by arginine 181, tyrosine 203, and lysine 214. Residues 181–205 (RDVRTIEYLGVNACIMAFPPEKYAQ) are Extracellular-facing. A helical membrane pass occupies residues 206–231 (WSAGIALMKNILGFIIPLIFIATCYF). The Cytoplasmic segment spans residues 232–256 (GIRKHLLKTNSYGKNRITRDQVLKM). A helical transmembrane segment spans residues 257–280 (AAAVVLAFIICWLPFHVLTFLDAL). Aspartate 278 lines the angiotensin II pocket. Residues 281–293 (AWMGVINSCEVIA) lie on the Extracellular side of the membrane. The helical transmembrane segment at 294-319 (VIDLALPFAILLGFTNSCINPFLYCF) threads the bilayer. Aspartate 296 is an angiotensin II binding site. The Cytoplasmic portion of the chain corresponds to 320–362 (VGNRFQQKLRRVFRVPITWLQGKRENGSCGKSSSFREMETFVS). Residues 323 to 332 (RFQQKLRRVF) form a helix VIII region.

It belongs to the G-protein coupled receptor 1 family. In terms of assembly, interacts with MTUS1.

It localises to the cell membrane. In terms of biological role, receptor for angiotensin II, a vasoconstricting peptide. Signals primarily via a non-canonical G-protein- and beta-arrestin independent pathways. Cooperates with MTUS1 to inhibit ERK2 activation and cell proliferation. This is Type-2 angiotensin II receptor (AGTR2) from Ovis aries (Sheep).